A 351-amino-acid chain; its full sequence is Phosphate acyltransferase (351 aa).

Belongs to the PlsX family. Homodimer. Probably interacts with PlsY.

The protein localises to the cytoplasm. It catalyses the reaction a fatty acyl-[ACP] + phosphate = an acyl phosphate + holo-[ACP]. It participates in lipid metabolism; phospholipid metabolism. Its function is as follows. Catalyzes the reversible formation of acyl-phosphate (acyl-PO(4)) from acyl-[acyl-carrier-protein] (acyl-ACP). This enzyme utilizes acyl-ACP as fatty acyl donor, but not acyl-CoA. The polypeptide is Phosphate acyltransferase (Paramagnetospirillum magneticum (strain ATCC 700264 / AMB-1) (Magnetospirillum magneticum)).